The chain runs to 315 residues: Protein phosphatase PTC7 homolog fig (315 aa).

The region spanning 54–309 (KHSIASAKDN…DDITVILATV (256 aa)) is the PPM-type phosphatase domain. Residues Asp86, Gly87, and Asp231 each coordinate Mn(2+).

It belongs to the PP2C family. It depends on Mg(2+) as a cofactor. Mn(2+) is required as a cofactor.

The enzyme catalyses O-phospho-L-seryl-[protein] + H2O = L-seryl-[protein] + phosphate. The catalysed reaction is O-phospho-L-threonyl-[protein] + H2O = L-threonyl-[protein] + phosphate. This Drosophila willistoni (Fruit fly) protein is Protein phosphatase PTC7 homolog fig.